A 563-amino-acid chain; its full sequence is Cytochrome b (563 aa).

Transmembrane regions (helical) follow at residues 36-61, 81-104, 119-141, 193-220, 255-276, 326-345, 358-379, 387-409, 436-454, 458-476, 505-527, and 539-557; these read SYWL…LLYY, SVLL…HMFR, WVTG…SLVS, RLLG…ERYG, LSIV…ANIN, ILTI…LPFL, FWTW…WGYL, TSAQ…YLWP, ILLG…FNFI, TLIN…IYAL, IAFF…MWTL, and MDLG…LYHY. Residues His87 and His101 each contribute to the heme site. Residues His198 and His212 each contribute to the heme site.

The protein belongs to the cytochrome b family. As to quaternary structure, it is a component of at least 2 distinct terminal oxidases, the quinol oxidase (SoxABC) and the alternate quinol oxidase with the core components SoxM and a Rieske Fe-S protein.

The protein resides in the cell membrane. Its function is as follows. Binds 2 heme groups (b586 and b606) which are not covalently bound to the protein. The sequence is that of Cytochrome b (soxC) from Sulfolobus acidocaldarius (strain ATCC 33909 / DSM 639 / JCM 8929 / NBRC 15157 / NCIMB 11770).